The primary structure comprises 239 residues: Fumarate reductase iron-sulfur subunit (239 aa).

A 2Fe-2S ferredoxin-type domain is found at 5-95; sequence LTIRVFKYDP…DGVITLLPLP (91 aa). [2Fe-2S] cluster is bound by residues Cys-57, Cys-62, Cys-65, and Cys-77. The 4Fe-4S ferredoxin-type domain maps to 142-171; sequence AQEVFELDRCIECGCCIAACGTKIMREDFV. [4Fe-4S] cluster is bound by residues Cys-151, Cys-154, and Cys-157. Residues Cys-161, Cys-208, and Cys-214 each contribute to the [3Fe-4S] cluster site. Cys-218 serves as a coordination point for [4Fe-4S] cluster.

The protein belongs to the succinate dehydrogenase/fumarate reductase iron-sulfur protein family. Part of an enzyme complex containing three subunits: a flavoprotein (frdA), an iron-sulfur protein (frdB), and diheme cytochrome b (frdC). It depends on [2Fe-2S] cluster as a cofactor. Requires [3Fe-4S] cluster as cofactor. The cofactor is [4Fe-4S] cluster.

It localises to the cell inner membrane. It catalyses the reaction a menaquinone + succinate = a menaquinol + fumarate. In terms of biological role, the fumarate reductase enzyme complex is required for fumarate respiration using formate or sulfide as electron donor. The protein is Fumarate reductase iron-sulfur subunit (frdB) of Wolinella succinogenes (strain ATCC 29543 / DSM 1740 / CCUG 13145 / JCM 31913 / LMG 7466 / NCTC 11488 / FDC 602W) (Vibrio succinogenes).